The primary structure comprises 116 residues: Protein Wnt-5a (116 aa).

Serine 1 carries O-palmitoleoyl serine; by PORCN lipidation. N-linked (GlcNAc...) asparagine glycosylation is found at asparagine 69 and asparagine 83. Cysteine 82 and cysteine 97 form a disulfide bridge.

The protein belongs to the Wnt family. In terms of processing, palmitoleoylation is required for efficient binding to frizzled receptors. Depalmitoleoylation leads to Wnt signaling pathway inhibition.

Its subcellular location is the secreted. It localises to the extracellular space. The protein resides in the extracellular matrix. Functionally, ligand for members of the frizzled family of seven transmembrane receptors. Can activate or inhibit canonical Wnt signaling, depending on receptor context. Required during embryogenesis for extension of the primary anterior-posterior axis. In Anser caerulescens (Snow goose), this protein is Protein Wnt-5a (WNT5A).